The primary structure comprises 328 residues: Fructokinase-2 (328 aa).

It belongs to the carbohydrate kinase PfkB family.

The enzyme catalyses D-fructose + ATP = D-fructose 6-phosphate + ADP + H(+). Its pathway is glycan biosynthesis; starch biosynthesis. In terms of biological role, may play an important role in maintaining the flux of carbon towards starch formation. The polypeptide is Fructokinase-2 (FRK2) (Solanum lycopersicum (Tomato)).